Consider the following 346-residue polypeptide: ATP-dependent (S)-NAD(P)H-hydrate dehydratase 2 (346 aa).

Residues 1–20 (MMVHSPLATGPHPTTHLEPT) form a disordered region. A YjeF C-terminal domain is found at 28–339 (LLRKAFQMIP…GYIGEAFEQV (312 aa)). (6S)-NADPHX contacts are provided by residues G135 and 188–194 (NHVEFQR). Residues 228–232 (KGSID) and 248–257 (GSPKRCGGQG) contribute to the ATP site. D258 contacts (6S)-NADPHX.

It belongs to the NnrD/CARKD family. Requires Mg(2+) as cofactor.

It is found in the cytoplasm. The enzyme catalyses (6S)-NADHX + ATP = ADP + phosphate + NADH + H(+). It carries out the reaction (6S)-NADPHX + ATP = ADP + phosphate + NADPH + H(+). Functionally, catalyzes the dehydration of the S-form of NAD(P)HX at the expense of ATP, which is converted to ADP. Together with NAD(P)HX epimerase, which catalyzes the epimerization of the S- and R-forms, the enzyme allows the repair of both epimers of NAD(P)HX, a damaged form of NAD(P)H that is a result of enzymatic or heat-dependent hydration. The sequence is that of ATP-dependent (S)-NAD(P)H-hydrate dehydratase 2 from Puccinia graminis f. sp. tritici (strain CRL 75-36-700-3 / race SCCL) (Black stem rust fungus).